The sequence spans 1171 residues: DExH-box ATP-dependent RNA helicase DExH15 chloroplastic (1171 aa).

The transit peptide at Met-1 to Ser-58 directs the protein to the chloroplast. The span at Asn-53–Leu-62 shows a compositional bias: polar residues. Residues Asn-53 to Leu-111 are disordered. 2 stretches are compositionally biased toward acidic residues: residues Tyr-63–Ser-90 and Asp-97–Phe-107. The Helicase ATP-binding domain occupies Ile-163–Glu-327. Ala-176–Thr-183 lines the ATP pocket. The short motif at Asp-275–His-278 is the DEVH box element. Residues Gln-424 to Val-620 enclose the Helicase C-terminal domain.

The protein belongs to the DExH box helicase family.

It localises to the plastid. The protein resides in the chloroplast. Its subcellular location is the cytoplasmic granule. It carries out the reaction ATP + H2O = ADP + phosphate + H(+). In terms of biological role, RNA helicase involved in group II intron splicing. Essential protein required during embryogenesis. Involved in post-transcriptional gene silencing. Modulates the determination of cell fate. Necessary for normal plasmodesmata (PD) development and aperture regulation. This Arabidopsis thaliana (Mouse-ear cress) protein is DExH-box ATP-dependent RNA helicase DExH15 chloroplastic (ISE2).